Reading from the N-terminus, the 287-residue chain is AA9 family lytic polysaccharide monooxygenase D (287 aa).

A signal peptide spans 1 to 17; it reads MKLSLLAAAAIAPMVSA. His-18 serves as a coordination point for Cu(2+). Cys-67 and Cys-189 form a disulfide bridge. His-176 is a binding site for O2. A Cu(2+)-binding site is contributed by Tyr-186. N-linked (GlcNAc...) asparagine glycosylation is found at Asn-220 and Asn-250. The interval 239–287 is disordered; it reads TGGSGSSTGSYNESNAEDSNEYPYQKESGTCQSNFYRREHARDFSHRRA. Residues 274–287 show a composition bias toward basic and acidic residues; the sequence is YRREHARDFSHRRA.

This sequence belongs to the polysaccharide monooxygenase AA9 family. Requires Cu(2+) as cofactor.

Its subcellular location is the secreted. It carries out the reaction [(1-&gt;4)-beta-D-glucosyl]n+m + reduced acceptor + O2 = 4-dehydro-beta-D-glucosyl-[(1-&gt;4)-beta-D-glucosyl]n-1 + [(1-&gt;4)-beta-D-glucosyl]m + acceptor + H2O.. Functionally, lytic polysaccharide monooxygenase (LPMO) that depolymerizes crystalline and amorphous polysaccharides via the oxidation of scissile alpha- or beta-(1-4)-glycosidic bonds, yielding C1 oxidation products. Catalysis by LPMOs requires the reduction of the active-site copper from Cu(II) to Cu(I) by a reducing agent and H(2)O(2) or O(2) as a cosubstrate. Active on celluloseas as well as on the hemicellulose xyloglucan. Shows synergy with other hydrolases in degrading sorghum stover. The protein is AA9 family lytic polysaccharide monooxygenase D of Emericella nidulans (strain FGSC A4 / ATCC 38163 / CBS 112.46 / NRRL 194 / M139) (Aspergillus nidulans).